A 162-amino-acid chain; its full sequence is MKLNFLVTTVALLVAFPPPYECRAIEGSSNQPATDPDGERQSPPVLARLGEEYFIRLGNRNQNYLRSPADSFPETSQYSKRALQLQLTQRLLEGKVGNIGRLDGNYALRALDSVERERRSEEPPISLDLTFHLLREVLEMARAEQMAQQAHSNRKMMEIFGK.

The signal sequence occupies residues 1-24; that stretch reads MKLNFLVTTVALLVAFPPPYECRA. Positions 25–119 are excised as a propeptide; sequence IEGSSNQPAT…ALDSVERERR (95 aa). At phenylalanine 160 the chain carries Phenylalanine amide.

It belongs to the sauvagine/corticotropin-releasing factor/urotensin I family.

The protein resides in the secreted. Functionally, this hormone from hypothalamus regulates the release of corticotropin from pituitary gland. The protein is Corticoliberin (crh) of Carassius auratus (Goldfish).